A 455-amino-acid chain; its full sequence is Protein king tubby (455 aa).

Residues 35 to 92 form a disordered region; the sequence is RPMSGMRGNSRELHAYDGPMQFIGSPHNPDQILSNNSSSVHLSSSMNSSRNNSNNLRS. Positions 67 to 92 are enriched in low complexity; the sequence is LSNNSSSVHLSSSMNSSRNNSNNLRS. Ser144 carries the phosphoserine modification.

This sequence belongs to the TUB family.

The protein localises to the cytoplasm. It is found in the nucleus. The protein resides in the cell projection. Its subcellular location is the cilium membrane. It localises to the rhabdomere. The sequence is that of Protein king tubby from Drosophila virilis (Fruit fly).